The chain runs to 1044 residues: MSDSQQSIKVLEELFQKLSVATADNRHEIASEVASFLNGNIIEHDVPEHFFGELAKGIKDKKTAANAMQAVAHIANQSNLSPSVEPYIVQLVPAICTNAGNKDKEIQSVASETLISIVNAVNPVAIKALLPHLTNAIVETNKWQEKIAILAAISAMVDAAKDQVALRMPELIPVLSETMWDTKKEVKAAATAAMTKATETVDNKDIERFIPSLIQCIADPTEVPETVHLLGATTFVAEVTPATLSIMVPLLSRGLNERETGIKRKSAVIIDNMCKLVEDPQVIAPFLGKLLPGLKSNFATIADPEAREVTLRALKTLRRVGNVGEDDAIPEVSHAGDVSTTLQVVNELLKDETVAPRFKIVVEYIAAIGADLIDERIIDQQAWFTHITPYMTIFLHEKKAKDILDEFRKRAVDNIPVGPNFDDEEDEGEDLCNCEFSLAYGAKILLNKTQLRLKRARRYGICGPNGCGKSTLMRAIANGQVDGFPTQEECRTVYVEHDIDGTHSDTSVLDFVFESGVGTKEAIKDKLIEFGFTDEMIAMPISALSGGWKMKLALARAVLRNADILLLDEPTNHLDTVNVAWLVNYLNTCGITSITISHDSVFLDNVCEYIINYEGLKLRKYKGNFTEFVKKCPAAKAYEELSNTDLEFKFPEPGYLEGVKTKQKAIVKVTNMEFQYPGTSKPQITDINFQCSLSSRIAVIGPNGAGKSTLINVLTGELLPTSGEVYTHENCRIAYIKQHAFAHIESHLDKTPSEYIQWRFQTGEDRETMDRANRQINENDAEAMNKIFKIEGTPRRIAGIHSRRKFKNTYEYECSFLLGENIGMKSERWVPMMSVDNAWIPRGELVESHSKMVAEVDMKEALASGQFRPLTRKEIEEHCSMLGLDPEIVSHSRIRGLSGGQKVKLVLAAGTWQRPHLIVLDEPTNYLDRDSLGALSKALKEFEGGVIIITHSAEFTKNLTEEVWAVKDGRMTPSGHNWVSGQGAGPRIEKKEDEEDKFDAMGNKIAGGKKKKKLSSAELRKKKKERMKKKKELGDAYVSSDEEF.

The residue at position 2 (Ser2) is an N-acetylserine. The stretch at 5–42 (QQSIKVLEELFQKLSVATADNRHEIASEVASFLNGNII) is one HEAT 1 repeat. ADP-binding residues include Ile42, His44, and Ser83. HEAT repeat units lie at residues 86–123 (PYIV…AVNP), 125–162 (AIKA…AAKD), 166–203 (LRMP…TVDN), 205–241 (DIER…EVTP), 242–279 (ATLS…LVED), and 285–323 (PFLG…VGNV). N6,N6,N6-trimethyllysine is present on residues Lys187 and Lys196. Residue Lys350 forms a Glycyl lysine isopeptide (Lys-Gly) (interchain with G-Cter in ubiquitin) linkage. Residues Thr392, His396, and Glu397 each contribute to the ADP site. In terms of domain architecture, ABC transporter 1 spans 426–641 (DEGEDLCNCE…CPAAKAYEEL (216 aa)). A Glycyl lysine isopeptide (Lys-Gly) (interchain with G-Cter in ubiquitin) cross-link involves residue Lys636. Ser642 bears the Phosphoserine mark. In terms of domain architecture, ABC transporter 2 spans 667–993 (VKVTNMEFQY…AGPRIEKKED (327 aa)). An ADP-binding site is contributed by Asn703. N6,N6,N6-trimethyllysine is present on Lys789. ADP-binding residues include Glu922, Asn925, and His951. Position 972 is a phosphothreonine (Thr972). At Ser974 the chain carries Phosphoserine. The segment at 974–1044 (SGHNWVSGQG…DAYVSSDEEF (71 aa)) is disordered. The span at 1007 to 1031 (GGKKKKKLSSAELRKKKKERMKKKK) shows a compositional bias: basic residues. A phosphoserine mark is found at Ser1039 and Ser1040.

The protein belongs to the ABC transporter superfamily. ABCF family. EF3 subfamily. In terms of assembly, monomer. Interacts with elongation factor 1A (eEF1A). Interacts through its N-terminus with 18S rRNA. Associates with ribosomes; preferentially binds ribosomes in the post-translocational state (bearing a peptidyl-tRNA in the P-site) in the presence of ATP, suggesting that ATP hydrolysis is required for ribosome dissociation.

Its subcellular location is the cytoplasm. The protein resides in the cytosol. It carries out the reaction ATP + H2O = ADP + phosphate + H(+). The protein operates within protein biosynthesis; polypeptide chain elongation. Its activity is regulated as follows. Inhibited by the translational inhibitors neomycin and alpha-sarcin, which suppress the ATPase activity. Its function is as follows. Ribosome-dependent ATPase that functions in cytoplasmic translation elongation. Required for the ATP-dependent release of deacylated tRNA from the ribosomal E-site during protein biosynthesis. Stimulates the eEF1A-dependent binding of aminoacyl-tRNA to the ribosomal A-site, which has reduced affinity for tRNA as long as the E-site is occupied. Assists translation termination by stimulating the release of nascent protein from the ribosome by release factors. In nutrient-replete conditions, occupies the space on the ribosome bound by GCN1 during amino acid starvation conditions, and therefore indirectly negatively regulates GCN2 kinase activity in replete conditions. This Saccharomyces cerevisiae (strain ATCC 204508 / S288c) (Baker's yeast) protein is Elongation factor 3A (YEF3).